The following is a 273-amino-acid chain: Undecaprenyl-diphosphatase (273 aa).

A run of 8 helical transmembrane segments spans residues 3 to 23 (IVEIIKAIILGMVEGLTEFAP), 48 to 68 (AANTFKVVIQLGSILAVVVVF), 92 to 112 (MQVIVGLIPAGVLGVLFEDYI), 116 to 136 (LFSTATVLIGLVLGALLMIAA), 152 to 172 (ITYKQALIVGLVQCLSLWPGF), 193 to 213 (ADFTFIMAVPIMMGASVLSLL), 220 to 240 (TIDALPFFTAGFISAFLFALI), and 252 to 272 (IRLVPFAVYRIVLALVIYIVY).

It belongs to the UppP family.

Its subcellular location is the cell membrane. The catalysed reaction is di-trans,octa-cis-undecaprenyl diphosphate + H2O = di-trans,octa-cis-undecaprenyl phosphate + phosphate + H(+). Catalyzes the dephosphorylation of undecaprenyl diphosphate (UPP). Confers resistance to bacitracin. In Geobacillus sp. (strain WCH70), this protein is Undecaprenyl-diphosphatase.